The following is a 124-amino-acid chain: Kalata-B1 (124 aa).

The N-terminal stretch at 1-22 is a signal peptide; sequence MAKFTVCLLLCLLLAAFVGAFG. A propeptide spanning residues 23-88 is cleaved from the precursor; the sequence is SELSDSHKTT…QVFLKQLQLK (66 aa). The segment at residues 89–117 is a cross-link (cyclopeptide (Gly-Asn)); the sequence is GLPVCGETCVGGTCNTPGCTCSWPVCTRN. 3 disulfide bridges follow: Cys-93-Cys-107, Cys-97-Cys-109, and Cys-102-Cys-114. Positions 118 to 124 are excised as a propeptide; the sequence is GLPSLAA.

This sequence belongs to the cyclotide family. Moebius subfamily. Kalata-B1 is a cyclic peptide which occurs in three forms: with unmodified Trp-111, with Trp-111 oxidized to form oxindolylalanine and with Trp-111 oxidized to form N-formylkynurenine. Oxidation is enhanced by exposure to sunlight. In terms of tissue distribution, leaves and stems. Lower in roots.

Its function is as follows. Probably participates in a plant defense mechanism. Has antibiotic activity. Has a diuretic effect. Has a uterotonic effect in humans. Active against the Gram-positive S.aureus with a minimum inhibition concentration of approximately 0.2 microM. Relatively ineffective against Gram-negative bacteria such as E.coli and P.aeruginosa. Inhibitory effect on the growth and development of larvae from H.punctigera. The unmodified form has hemolytic activity, the oxidized form lacks hemolytic activity. If the protein is linearized, hemolytic activity is lost. This Oldenlandia affinis protein is Kalata-B1 (OAK1).